A 267-amino-acid polypeptide reads, in one-letter code: Small ribosomal subunit protein uS2 (267 aa).

The tract at residues 224–267 is disordered; the sequence is GRQGEDQVDEKTFEGQKSEAAEGDKKTADNSMEDIVNAVEGDNK. A compositionally biased stretch (basic and acidic residues) spans 225–251; it reads RQGEDQVDEKTFEGQKSEAAEGDKKTA.

It belongs to the universal ribosomal protein uS2 family.

The sequence is that of Small ribosomal subunit protein uS2 from Levilactobacillus brevis (strain ATCC 367 / BCRC 12310 / CIP 105137 / JCM 1170 / LMG 11437 / NCIMB 947 / NCTC 947) (Lactobacillus brevis).